A 131-amino-acid polypeptide reads, in one-letter code: Auxin-responsive protein SAUR77 (131 aa).

The protein belongs to the ARG7 family.

May be involved in the regulation of ethylene receptor signaling. Promotes cell expansion and plant growth. The chain is Auxin-responsive protein SAUR77 from Arabidopsis thaliana (Mouse-ear cress).